We begin with the raw amino-acid sequence, 1336 residues long: Zinc finger protein 335 (1336 aa).

Disordered stretches follow at residues 1–108 and 199–222; these read MEEN…LVHS and PTSTSTCLEPAEQPPGEPSSLAQP. Low complexity-rich tracts occupy residues 31-45 and 54-65; these read TSEAVSADSTDAATA and SGVGQSSDSGSR. A C2H2-type 1 zinc finger spans residues 247–270; it reads FKCKMCQYRSSTKATLLRHMRERH. Disordered stretches follow at residues 282-398 and 415-442; these read AGKR…PSSS and VSQSDAENAAPSCQDEADVPPRRRGRPS. A compositionally biased stretch (acidic residues) spans 300–331; that stretch reads EEGPEEEEEDDDIVDAGAIDDLEEDSDYNPAE. Positions 339-349 are enriched in low complexity; that stretch reads LRLQRPTPSTL. The span at 350–361 shows a compositional bias: basic residues; it reads RPRRRPGRPRKL. Positions 362-373 are enriched in basic and acidic residues; sequence PRLETSDLHDGI. The span at 378–387 shows a compositional bias: polar residues; it reads VSSQSTQSPP. 8 consecutive C2H2-type zinc fingers follow at residues 465–487, 495–517, 523–545, 562–584, 590–612, 621–643, 649–672, and 678–701; these read YLCRICGSRFLSHEDLRFHVNSH, FKCLQCSYRSRRWSSLKEHMFNH, YKCDECSYTSVYRKDVIRHAAVH, FPCPVCGRVYPMQKRLTQHMKTH, HMCDKCGKSFKKRYTFKMHLLTH, FKCEFCEFVCEDKKALLNHQLSH, FKCSFCPYRTFREDFLLSHVAVKH, and FACEYCHFSTRHKKNLRLHVRCRH. 2 disordered regions span residues 732-766 and 961-1013; these read LKQQHSAAPGPPLSSAGPEAPQEPAPFQPPETPPL and LQCG…AAAS. Pro residues predominate over residues 752–766; sequence PQEPAPFQPPETPPL. Phosphoserine is present on residues serine 975 and serine 1006. 4 C2H2-type zinc fingers span residues 1018–1040, 1046–1068, 1074–1096, and 1102–1125; these read FSCKVCSEAFPSRAEMESHKRAH, FKCPDCPFSARQWPEVRAHMAQH, HQCNQCSFASKNKKDLRRHMLTH, and FSCHVCGQRFNRNGHLKFHIQRLH. Residue lysine 1021 forms a Glycyl lysine isopeptide (Lys-Gly) (interchain with G-Cter in SUMO2) linkage. Serine 1148 is modified (phosphoserine).

This sequence belongs to the krueppel C2H2-type zinc-finger protein family. In terms of assembly, interacts with NCOA6; may enhance ligand-dependent transcriptional activation by nuclear hormone receptors. Interacts with CNOT6. Interacts with CNOT9; the interaction is direct. Component of a nuclear receptor-mediated transcription complex composed of at least ZNF335, CCAR2 and EMSY; the complex stimulates the transcription of nuclear receptor target genes such as SOX9 and HOXA1. Within the complex interacts with EMSY and interacts (via C-terminus) with CCAR2. Interacts with members of histone H3'Lys4'(H3K4) methyltransferase complexes ASH2L, CXXC1, KMT2A/MLL1, RBBP5, SETD1A and WDR5. Component of a histone methylation complex composed of at least ZNF335, RBBP5, ASH2L and WDR5; the complex may have histone H3-specific methyltransferase activity, however does not have specificity for 'Lys-4' of histone H3. Interacts with RBBP5 and WDR5. Interacts with ASHL2. Components of this complex may associate with components of the ZNF335-CCAR2-EMSY nuclear receptor-mediated transcription complex to form a complex at least composed of ZNF335, HCFC1, CCAR2, EMSY, MKI67, RBBP5, ASH2L and WDR5. Within this complex also interacts with HCFC1 and MKI67.

It localises to the nucleus. In terms of biological role, component or associated component of some histone methyltransferase complexes may regulate transcription through recruitment of those complexes on gene promoters. Enhances ligand-dependent transcriptional activation by nuclear hormone receptors. Plays an important role in neural progenitor cell proliferation and self-renewal through the regulation of specific genes involved brain development, including REST. Also controls the expression of genes involved in somatic development and regulates, for instance, lymphoblast proliferation. The sequence is that of Zinc finger protein 335 (Znf335) from Rattus norvegicus (Rat).